We begin with the raw amino-acid sequence, 143 residues long: Large ribosomal subunit protein uL16c (143 aa).

It belongs to the universal ribosomal protein uL16 family. In terms of assembly, part of the 50S ribosomal subunit.

It is found in the plastid. Its subcellular location is the chloroplast. The sequence is that of Large ribosomal subunit protein uL16c from Chlorokybus atmophyticus (Soil alga).